The following is a 459-amino-acid chain: Ribosomal protein uS12 methylthiotransferase RimO (459 aa).

Residues 11 to 126 enclose the MTTase N-terminal domain; the sequence is PKVGMVSLGC…VMQAVHSHLP (116 aa). Residues cysteine 20, cysteine 56, cysteine 85, cysteine 157, cysteine 161, and cysteine 164 each coordinate [4Fe-4S] cluster. In terms of domain architecture, Radical SAM core spans 143–388; sequence LTPRHYAYLK…MEVAEEVSAA (246 aa). The TRAM domain occupies 391–459; sequence ARKVGKTLKV…ADGHDLWGEV (69 aa).

It belongs to the methylthiotransferase family. RimO subfamily. It depends on [4Fe-4S] cluster as a cofactor.

Its subcellular location is the cytoplasm. It catalyses the reaction L-aspartate(89)-[ribosomal protein uS12]-hydrogen + (sulfur carrier)-SH + AH2 + 2 S-adenosyl-L-methionine = 3-methylsulfanyl-L-aspartate(89)-[ribosomal protein uS12]-hydrogen + (sulfur carrier)-H + 5'-deoxyadenosine + L-methionine + A + S-adenosyl-L-homocysteine + 2 H(+). In terms of biological role, catalyzes the methylthiolation of an aspartic acid residue of ribosomal protein uS12. This is Ribosomal protein uS12 methylthiotransferase RimO from Burkholderia pseudomallei (strain K96243).